A 318-amino-acid chain; its full sequence is Basic leucine zipper (bZIP) transcription factor atfB (318 aa).

The tract at residues 114-157 is disordered; that stretch reads FNSSPPEYAPPKHRSSLSEQSQTDGYGVSTRRRKASAIDQCEQQ. The tract at residues 160 to 199 is basic motif; that stretch reads REKREKFLERNRLAASKCRQKKKEHTKLLETRFREVSNKK. The bZIP domain occupies 160–223; the sequence is REKREKFLER…LNLKNEMLRH (64 aa). Residues 202-216 are leucine-zipper; that stretch reads LESEIEHLRSEVLNL. The disordered stretch occupies residues 275-301; it reads DGPMQLPSEMGSPLDQRRDSEQSIMTE.

The protein belongs to the bZIP family. ATF subfamily.

It localises to the nucleus. Functionally, transcription factor that acts as a key player in the regulatory circuit that integrates secondary metabolism and cellular response to oxidative stress. Regulates the genes involved in development and stress response through direct binding to their promoters. The polypeptide is Basic leucine zipper (bZIP) transcription factor atfB (Aspergillus flavus (strain ATCC 200026 / FGSC A1120 / IAM 13836 / NRRL 3357 / JCM 12722 / SRRC 167)).